The primary structure comprises 439 residues: Hydrogenobyrinate a,c-diamide synthase (439 aa).

In terms of domain architecture, GATase cobBQ-type spans 247–439 (RIALAEDGAF…FFHAIARASA (193 aa)). Cys-329 acts as the Nucleophile in catalysis.

The protein belongs to the CobB/CbiA family. Requires Mg(2+) as cofactor.

The catalysed reaction is hydrogenobyrinate + 2 L-glutamine + 2 ATP + 2 H2O = hydrogenobyrinate a,c-diamide + 2 L-glutamate + 2 ADP + 2 phosphate + 2 H(+). Its pathway is cofactor biosynthesis; adenosylcobalamin biosynthesis; cob(II)yrinate a,c-diamide from precorrin-2 (aerobic route): step 9/10. Catalyzes the ATP-dependent amidation of the two carboxylate groups at positions a and c of hydrogenobyrinate, using either L-glutamine or ammonia as the nitrogen source. The protein is Hydrogenobyrinate a,c-diamide synthase of Mesorhizobium japonicum (strain LMG 29417 / CECT 9101 / MAFF 303099) (Mesorhizobium loti (strain MAFF 303099)).